The primary structure comprises 2549 residues: Serine/threonine-protein kinase mTOR (2549 aa).

Position 1 is an N-acetylmethionine (Met1). The tract at residues 1–651 (MLGTGPATAT…HVVSQTAVQV (651 aa)) is interaction with NBN. HEAT repeat units lie at residues 16 to 53 (SSNV…MELR), 55 to 99 (MSQE…VEGG), 100 to 137 (NSTR…AMAG), 138 to 179 (DTFT…AISV), 180 to 220 (PTFF…LILT), 222 to 276 (QREP…RISS), 277 to 313 (MEGE…PRHI), 314 to 364 (TPFT…CCRD), 365 to 409 (LMEE…AFTD), 410 to 445 (TQYL…VAVR), 446 to 494 (SEFK…RAMG), 495 to 529 (PGIQ…RQIP), 530 to 563 (QLKK…GLAH), 564 to 596 (QLAS…EFEG), 597 to 636 (HSLT…SIHL), 637 to 683 (ISGH…DERF), 686 to 724 (HLAQ…MNPA), 727 to 766 (MPFL…NAPR), 769 to 811 (RPYM…VSGL), 814 to 853 (RKWV…STGY), 857 to 893 (PYRK…LLGA), 894 to 942 (LDPY…GNLP), 943 to 988 (LDEF…KCVQ), 989 to 1027 (FLPQ…KSHI), 1029 to 1068 (PYMD…GEFK), 1069 to 1105 (LYLP…LFGA), 1106 to 1144 (NLDD…RLTE), 1145 to 1188 (SLDF…GKKY), 1189 to 1225 (QIFI…LADE), 1226 to 1273 (EEDP…GAAR), 1274 to 1311 (RVSK…QAYN), and 1312 to 1345 (PMAR…ELAL). Phosphoserine is present on Ser567. At Thr1162 the chain carries Phosphothreonine. Lys1218 carries the N6-acetyllysine modification. The residue at position 1261 (Ser1261) is a Phosphoserine. TPR repeat units follow at residues 1346 to 1382 (TSQD…GIVL), 1383 to 1408 (LGER…QKGP), 1409 to 1442 (TPAI…HFGE), 1443 to 1473 (LEIQ…NKDD), 1474 to 1507 (PELM…VNDE), 1508 to 1541 (TQAK…RDTH), 1542 to 1574 (DGAF…LDAE), 1575 to 1614 (LTAM…RREI), 1615 to 1649 (IRQI…PHED), 1650 to 1693 (MRTW…PTVH), 1694 to 1731 (PQVT…AQHA), 1732 to 1786 (IATE…DRSW), 1787 to 1846 (YKAW…STEG), 1898 to 1930 (NNLQ…VKAI), 1931 to 1970 (QIDT…YHPQ), and 1971 to 2005 (ALIY…SNTL). Residues 1382–1982 (LLGERAAKCR…IYPLTVASKS (601 aa)) form the FAT domain. 1D-myo-inositol hexakisphosphate contacts are provided by Lys1662, Lys1702, and Arg1749. Residues 1812-1867 (DEKKKLRHASGANITNATTTATTAASAAAATSTEGSNSESEAESNESSPTPSPLQK) are disordered. A compositionally biased stretch (low complexity) spans 1826–1860 (TNATTTATTAASAAAATSTEGSNSESEAESNESSP). Residues 2012-2144 (VSEELIRVAI…DLELAVPGTY (133 aa)) form a sufficient for interaction with the FKBP1A/rapamycin complex region. Lys2066 participates in a covalent cross-link: Glycyl lysine isopeptide (Lys-Gly) (interchain with G-Cter in ubiquitin). A PI3K/PI4K catalytic domain is found at 2156–2469 (IAPSLQVITS…GVELGEPAHK (314 aa)). The residue at position 2159 (Ser2159) is a Phosphoserine. The interval 2162-2168 (VITSKQR) is G-loop. Thr2164 is modified (phosphothreonine). ATP-binding residues include Ser2165 and Gln2167. Phosphothreonine; by PKB/AKT1 is present on Thr2173. Positions 2185, 2187, 2190, 2225, 2238, 2239, 2240, and 2245 each coordinate ATP. An interaction with MLST8 region spans residues 2258–2296 (KILLNIEHRIMLRMAPDYDHLTLMQKVEVFEHAVNNTAG). Residues 2335–2343 (GLGDRHPSN) are catalytic loop. Position 2343 (Asn2343) interacts with Mg(2+). 2 residues coordinate ATP: Met2345 and Ile2356. The segment at 2355–2380 (HIDFGDCFEVAMTREKFPEKIPFRLT) is activation loop. Asp2357 lines the Mg(2+) pocket. Phosphothreonine; by RPS6KB1 is present on Thr2446. The residue at position 2448 (Ser2448) is a Phosphoserine; by RPS6KB1. Position 2478 is a phosphoserine (Ser2478). A Phosphoserine; by autocatalysis modification is found at Ser2481. The region spanning 2517-2549 (DTLDVPTQVELLIKQATSHENLCQCYIGWCPFW) is the FATC domain.

Belongs to the PI3/PI4-kinase family. As to quaternary structure, part of the mechanistic target of rapamycin complex 1 (mTORC1) which contains MTOR, MLST8 and RPTOR. The mTORC1 complex is a 1 Md obligate dimer of two stoichiometric heterotetramers with overall dimensions of 290 A x 210 A x 135 A. It has a rhomboid shape and a central cavity, the dimeric interfaces are formed by interlocking interactions between the two MTOR and the two RPTOR subunits. The MLST8 subunit forms distal foot-like protuberances, and contacts only one MTOR within the complex, while the small AKT1S1/PRAS40 localizes to the midsection of the central core, in close proximity to RPTOR. mTORC1 associates with AKT1S1/PRAS40, which inhibits its activity by blocking MTOR substrate-recruitment site. Component of the mechanistic target of rapamycin complex 2 (mTORC2), consisting in two heterotretramers composed of MTOR, MLST8, RICTOR and MAPKAP1/SIN1. Interacts with PLPP7 and PML. Interacts with PRR5 and RICTOR; the interaction is direct within the mTORC2 complex and interaction with RICTOR is enhanced by deubiquitination of RICTOR by USP9X. mTORC1 and mTORC2 associate with DEPTOR, which regulates their activity. Interacts with WAC; WAC positively regulates MTOR activity by promoting the assembly of the TTT complex composed of TELO2, TTI1 and TTI2 and the RUVBL complex composed of RUVBL1 and RUVBL2 into the TTT-RUVBL complex which leads to the dimerization of the mTORC1 complex and its subsequent activation. Interacts with UBQLN1. Interacts with TTI1 and TELO2. Interacts with CLIP1; phosphorylates and regulates CLIP1. Interacts with NBN. Interacts with HTR6. Interacts with BRAT1. Interacts with MEAK7 (via C-terminal domain); the interaction increases upon nutrient stimulation. Interacts with TM4SF5; the interaction is positively regulated by arginine and is negatively regulated by leucine. Interacts with GPR137B. Interacts with NCKAP1L. Interacts with TPCN1 and TPCN2; the interaction is required for TPCN1 and TPCN2 sensitivity to ATP. Interacts with ATP6V1A and with CRYAB, forming a ternary complex. Interacts with SLC38A7; this interaction mediates the recruitment of mTORC1 to the lysosome and its subsequent activation. Interacts with TSPAN8. Post-translationally, autophosphorylates when part of mTORC1 or mTORC2. Phosphorylation at Ser-1261, Ser-2159 and Thr-2164 promotes autophosphorylation. Phosphorylated at Ser-2448 by RPS6KB1. Phosphorylation in the kinase domain modulates the interactions of MTOR with RPTOR and AKT1S1/PRAS40 and leads to increased intrinsic mTORC1 kinase activity. Phosphorylation at Ser-2159 by TBK1 in response to growth factors and pathogen recognition receptors promotes mTORC1 activity. Phosphorylation at Ser-2159 by TBK1 in response to EGF growth factor promotes mTORC2 activity, leading to AKT1 phosphorylation and activation. Phosphorylation at Thr-2173 in the ATP-binding region by AKT1 strongly reduces kinase activity. In terms of processing, ubiquitinated at Lys-2066 by the SCF(FBXO22) complex via 'Lys-27'-linked ubiquitination prevents mTORC1 substrate recruitment.

The protein resides in the lysosome membrane. Its subcellular location is the endoplasmic reticulum membrane. It is found in the golgi apparatus membrane. The protein localises to the cell membrane. It localises to the mitochondrion outer membrane. The protein resides in the cytoplasm. Its subcellular location is the nucleus. It is found in the PML body. The protein localises to the microsome membrane. It localises to the cytoplasmic vesicle. The protein resides in the phagosome. It catalyses the reaction L-seryl-[protein] + ATP = O-phospho-L-seryl-[protein] + ADP + H(+). It carries out the reaction L-threonyl-[protein] + ATP = O-phospho-L-threonyl-[protein] + ADP + H(+). The enzyme catalyses L-tyrosyl-[protein] + ATP = O-phospho-L-tyrosyl-[protein] + ADP + H(+). The mTORC1 complex is activated in response to nutrients, growth factors or amino acids: activation requires relocalization of the mTORC1 complex to lysosomes that is mediated by the Ragulator complex, SLC38A9, and the Rag GTPases RagA/RRAGA, RagB/RRAGB, RagC/RRAGC and RagD/RRAGD. Activation of mTORC1 by growth factors such as insulin involves AKT1-mediated phosphorylation of TSC1-TSC2, which leads to the activation of the RHEB GTPase a potent activator of the protein kinase activity of mTORC1. Insulin-stimulated and amino acid-dependent phosphorylation at Ser-1261 promotes autophosphorylation and the activation of mTORC1. On the other hand, low cellular energy levels can inhibit mTORC1 through activation of PRKAA1 while hypoxia inhibits mTORC1 through a REDD1-dependent mechanism which may also require PRKAA1. The kinase activity of MTOR within the mTORC1 complex is positively regulated by MLST8. The kinase activity of MTOR is inhibited by DEPTOR and AKT1S1. The non-canonical mTORC1 complex is independent of the RHEB GTPase and specifically mediates phosphorylation of MiT/TFE factors TFEB and TFE3 but not other mTORC1 substrates: it is activated by FLCN, which activates Rag GTPases RagC/RRAGC and RagD/RRAGD. MTOR is the target of the immunosuppressive and anti-cancer drug rapamycin which acts in complex with FKBP1A/FKBP12, and specifically inhibits its kinase activity. mTORC2 is also activated by growth factors, but seems to be nutrient-insensitive. mTORC2 associates and is directly activated by ribosomes. mTORC2 may also be regulated by RHEB but in an indirect manner through the PI3K signaling pathway. Its function is as follows. Serine/threonine protein kinase which is a central regulator of cellular metabolism, growth and survival in response to hormones, growth factors, nutrients, energy and stress signals. MTOR directly or indirectly regulates the phosphorylation of at least 800 proteins. Functions as part of 2 structurally and functionally distinct signaling complexes mTORC1 and mTORC2 (mTOR complex 1 and 2). In response to nutrients, growth factors or amino acids, mTORC1 is recruited to the lysosome membrane and promotes protein, lipid and nucleotide synthesis by phosphorylating key regulators of mRNA translation and ribosome synthesis. This includes phosphorylation of EIF4EBP1 and release of its inhibition toward the elongation initiation factor 4E (eiF4E). Moreover, phosphorylates and activates RPS6KB1 and RPS6KB2 that promote protein synthesis by modulating the activity of their downstream targets including ribosomal protein S6, eukaryotic translation initiation factor EIF4B, and the inhibitor of translation initiation PDCD4. Stimulates the pyrimidine biosynthesis pathway, both by acute regulation through RPS6KB1-mediated phosphorylation of the biosynthetic enzyme CAD, and delayed regulation, through transcriptional enhancement of the pentose phosphate pathway which produces 5-phosphoribosyl-1-pyrophosphate (PRPP), an allosteric activator of CAD at a later step in synthesis, this function is dependent on the mTORC1 complex. Regulates ribosome synthesis by activating RNA polymerase III-dependent transcription through phosphorylation and inhibition of MAF1 an RNA polymerase III-repressor. Activates dormant ribosomes by mediating phosphorylation of SERBP1, leading to SERBP1 inactivation and reactivation of translation. In parallel to protein synthesis, also regulates lipid synthesis through SREBF1/SREBP1 and LPIN1. To maintain energy homeostasis mTORC1 may also regulate mitochondrial biogenesis through regulation of PPARGC1A. In the same time, mTORC1 inhibits catabolic pathways: negatively regulates autophagy through phosphorylation of ULK1. Under nutrient sufficiency, phosphorylates ULK1 at 'Ser-758', disrupting the interaction with AMPK and preventing activation of ULK1. Also prevents autophagy through phosphorylation of the autophagy inhibitor DAP. Also prevents autophagy by phosphorylating RUBCNL/Pacer under nutrient-rich conditions. Prevents autophagy by mediating phosphorylation of AMBRA1, thereby inhibiting AMBRA1 ability to mediate ubiquitination of ULK1 and interaction between AMBRA1 and PPP2CA. mTORC1 exerts a feedback control on upstream growth factor signaling that includes phosphorylation and activation of GRB10 a INSR-dependent signaling suppressor. Among other potential targets mTORC1 may phosphorylate CLIP1 and regulate microtubules. The mTORC1 complex is inhibited in response to starvation and amino acid depletion. The non-canonical mTORC1 complex, which acts independently of RHEB, specifically mediates phosphorylation of MiT/TFE factors TFEB and TFE3 in the presence of nutrients, promoting their cytosolic retention and inactivation. Upon starvation or lysosomal stress, inhibition of mTORC1 induces dephosphorylation and nuclear translocation of TFEB and TFE3, promoting their transcription factor activity. The mTORC1 complex regulates pyroptosis in macrophages by promoting GSDMD oligomerization. MTOR phosphorylates RPTOR which in turn inhibits mTORC1. As part of the mTORC2 complex, MTOR transduces signals from growth factors to pathways involved in proliferation, cytoskeletal organization, lipogenesis and anabolic output. In response to growth factors, mTORC2 phosphorylates and activates AGC protein kinase family members, including AKT (AKT1, AKT2 and AKT3), PKC (PRKCA, PRKCB and PRKCE) and SGK1. In contrast to mTORC1, mTORC2 is nutrient-insensitive. mTORC2 plays a critical role in AKT1 activation by mediating phosphorylation of different sites depending on the context, such as 'Thr-450', 'Ser-473', 'Ser-477' or 'Thr-479', facilitating the phosphorylation of the activation loop of AKT1 on 'Thr-308' by PDPK1/PDK1 which is a prerequisite for full activation. mTORC2 also regulates the phosphorylation of SGK1 at 'Ser-422'. mTORC2 may regulate the actin cytoskeleton, through phosphorylation of PRKCA, PXN and activation of the Rho-type guanine nucleotide exchange factors RHOA and RAC1A or RAC1B. The mTORC2 complex also phosphorylates various proteins involved in insulin signaling, such as FBXW8 and IGF2BP1. May also regulate insulin signaling by acting as a tyrosine protein kinase that catalyzes phosphorylation of IGF1R and INSR. Regulates osteoclastogenesis by adjusting the expression of CEBPB isoforms. Plays an important regulatory role in the circadian clock function; regulates period length and rhythm amplitude of the suprachiasmatic nucleus (SCN) and liver clocks. In Rattus norvegicus (Rat), this protein is Serine/threonine-protein kinase mTOR.